We begin with the raw amino-acid sequence, 198 residues long: Holliday junction branch migration complex subunit RuvA (198 aa).

The segment at 1–64 is domain I; that stretch reads MIAHLRGTLL…EDAIALFGFL (64 aa). The domain II stretch occupies residues 65-141; that stretch reads DREEKRLFER…LDDLIAAAPA (77 aa). The interval 141–145 is flexible linker; sequence AAGPV. A domain III region spans residues 146 to 198; the sequence is AAGPAAEDVLSALLNLGYQRPAALKAIETAVEKDAAAGEDFDLLFRAALKLIR.

This sequence belongs to the RuvA family. As to quaternary structure, homotetramer. Forms an RuvA(8)-RuvB(12)-Holliday junction (HJ) complex. HJ DNA is sandwiched between 2 RuvA tetramers; dsDNA enters through RuvA and exits via RuvB. An RuvB hexamer assembles on each DNA strand where it exits the tetramer. Each RuvB hexamer is contacted by two RuvA subunits (via domain III) on 2 adjacent RuvB subunits; this complex drives branch migration. In the full resolvosome a probable DNA-RuvA(4)-RuvB(12)-RuvC(2) complex forms which resolves the HJ.

The protein resides in the cytoplasm. Its function is as follows. The RuvA-RuvB-RuvC complex processes Holliday junction (HJ) DNA during genetic recombination and DNA repair, while the RuvA-RuvB complex plays an important role in the rescue of blocked DNA replication forks via replication fork reversal (RFR). RuvA specifically binds to HJ cruciform DNA, conferring on it an open structure. The RuvB hexamer acts as an ATP-dependent pump, pulling dsDNA into and through the RuvAB complex. HJ branch migration allows RuvC to scan DNA until it finds its consensus sequence, where it cleaves and resolves the cruciform DNA. The chain is Holliday junction branch migration complex subunit RuvA from Acidobacterium capsulatum (strain ATCC 51196 / DSM 11244 / BCRC 80197 / JCM 7670 / NBRC 15755 / NCIMB 13165 / 161).